A 776-amino-acid polypeptide reads, in one-letter code: Calcium-independent phospholipase A2-gamma (776 aa).

N-linked (GlcNAc...) asparagine glycans are attached at residues asparagine 4 and asparagine 157. 2 disordered regions span residues 216–276 (KGKM…HPVS) and 306–334 (KLKS…DKKA). Basic and acidic residues-rich tracts occupy residues 221–239 (QTKE…ERKS) and 247–263 (VADR…KDKL). Residues 439-634 (LTIDGGGTRG…LLNNPSALAL (196 aa)) form the PNPLA domain. Residues 443–448 (GGGTRG) carry the GXGXXG motif. Residues 469 to 489 (LFDYICGVSTGAILAFMLGLF) form a helical membrane-spanning segment. Residues 475 to 479 (GVSTG) carry the GXSXG motif. The active-site Nucleophile is serine 477. The active-site Proton acceptor is the aspartate 621. Positions 621–623 (DGG) match the DGA/G motif. Residue lysine 730 is modified to N6-succinyllysine.

In terms of tissue distribution, expressed in myocardium (at protein level).

The protein localises to the endoplasmic reticulum membrane. The protein resides in the mitochondrion membrane. Its subcellular location is the peroxisome membrane. It catalyses the reaction a 1,2-diacyl-sn-glycero-3-phosphocholine + H2O = a 1-acyl-sn-glycero-3-phosphocholine + a fatty acid + H(+). It carries out the reaction a 1,2-diacyl-sn-glycero-3-phosphocholine + H2O = a 2-acyl-sn-glycero-3-phosphocholine + a fatty acid + H(+). The enzyme catalyses a 1,2-diacyl-sn-glycero-3-phosphoethanolamine + H2O = a 1-acyl-sn-glycero-3-phosphoethanolamine + a fatty acid + H(+). The catalysed reaction is a 1-O-(1Z-alkenyl)-2-acyl-sn-glycero-3-phosphocholine + H2O = a 1-O-(1Z-alkenyl)-sn-glycero-3-phosphocholine + a fatty acid + H(+). It catalyses the reaction a 1-acyl-sn-glycero-3-phosphocholine + H2O = sn-glycerol 3-phosphocholine + a fatty acid + H(+). It carries out the reaction 1-hexadecanoyl-2-(5Z,8Z,11Z,14Z-eicosatetraenoyl)-sn-glycero-3-phosphocholine + H2O = 2-(5Z,8Z,11Z,14Z)-eicosatetraenoyl-sn-glycero-3-phosphocholine + hexadecanoate + H(+). The enzyme catalyses 1-acyl-2-(9Z,12Z)-octadecadienoyl-sn-glycero-3-phosphocholine + H2O = a 1-acyl-sn-glycero-3-phosphocholine + (9Z,12Z)-octadecadienoate + H(+). The catalysed reaction is 1-acyl-2-(5Z,8Z,11Z,14Z-eicosatetraenoyl)-sn-glycero-3-phosphocholine + H2O = a 1-acyl-sn-glycero-3-phosphocholine + (5Z,8Z,11Z,14Z)-eicosatetraenoate + H(+). It catalyses the reaction 1-hexadecanoyl-2-(5Z,8Z,11Z,14Z-eicosatetraenoyl)-sn-glycero-3-phosphocholine + H2O = 1-hexadecanoyl-sn-glycero-3-phosphocholine + (5Z,8Z,11Z,14Z)-eicosatetraenoate + H(+). It carries out the reaction 1-octadecanoyl-2-(9Z-octadecenoyl)-sn-glycero-3-phosphocholine + H2O = 1-octadecanoyl-sn-glycero-3-phosphocholine + (9Z)-octadecenoate + H(+). The enzyme catalyses 1-hexadecanoyl-2-(9Z-octadecenoyl)-sn-glycero-3-phosphocholine + H2O = 1-hexadecanoyl-sn-glycero-3-phosphocholine + (9Z)-octadecenoate + H(+). The catalysed reaction is 1-hexadecanoyl-2-(9Z,12Z-octadecadienoyl)-sn-glycero-3-phosphocholine + H2O = (9Z,12Z)-octadecadienoate + 1-hexadecanoyl-sn-glycero-3-phosphocholine + H(+). It catalyses the reaction 1-acyl-2-(9Z,12Z)-octadecadienoyl-sn-glycero-3-phosphoethanolamine + H2O = a 1-acyl-sn-glycero-3-phosphoethanolamine + (9Z,12Z)-octadecadienoate + H(+). It carries out the reaction 1-acyl-2-(5Z,8Z,11Z,14Z)-eicosatetraenoyl-sn-glycero-3-phosphoethanolamine + H2O = a 1-acyl-sn-glycero-3-phosphoethanolamine + (5Z,8Z,11Z,14Z)-eicosatetraenoate + H(+). The enzyme catalyses 1-hexadecanoyl-2-(5Z,8Z,11Z,14Z-eicosatetraenoyl)-sn-glycero-3-phosphoethanolamine + H2O = 1-hexadecanoyl-sn-glycero-3-phosphoethanolamine + (5Z,8Z,11Z,14Z)-eicosatetraenoate + H(+). The catalysed reaction is 1-octadecanoyl-2-(9Z-octadecenoyl)-sn-glycero-3-phosphocholine + H2O = 2-(9Z-octadecenoyl)-sn-glycero-3-phosphocholine + octadecanoate + H(+). It catalyses the reaction 1-hexadecanoyl-2-(4Z,7Z,10Z,13Z,16Z,19Z-docosahexaenoyl)-sn-glycero-3-phosphocholine + H2O = 2-(4Z,7Z,10Z,13Z,16Z,19Z-docosahexaenoyl)-sn-glycero-3-phosphocholine + hexadecanoate + H(+). It carries out the reaction 1-O-(1Z)-hexadecenyl-2 (5Z,8Z,11Z,14Z)-eicosatetraenoyl-sn-glycero-3-phosphocholine + H2O = 1-(1Z-hexadecenyl)-sn-glycero-3-phosphocholine + (5Z,8Z,11Z,14Z)-eicosatetraenoate + H(+). The enzyme catalyses 1-O-(1Z-hexadecenyl)-2-(9Z-octadecenoyl)-sn-glycero-3-phosphocholine + H2O = 1-(1Z-hexadecenyl)-sn-glycero-3-phosphocholine + (9Z)-octadecenoate + H(+). The catalysed reaction is 1-hexadecanoyl-sn-glycero-3-phosphocholine + H2O = sn-glycerol 3-phosphocholine + hexadecanoate + H(+). It catalyses the reaction 1',3'-bis-[1,2-di-(9Z,12Z-octadecadienoyl)-sn-glycero-3-phospho]-glycerol + H2O = 1'-[1,2-di-(9Z,12Z-octadecadienoyl)-sn-glycero-3-phospho]-3'-[1-(9Z,12Z-octadecadienoyl)-sn-glycero-3-phospho]-glycerol + (9Z,12Z)-octadecadienoate + H(+). It carries out the reaction 1'-[1-acyl-2-(9-hydroxy-(10E,12Z)-octadecadienoyl)-sn-glycero-3-phospho]-3'-[1,2-diacyl-sn-glycero-3-phospho]-glycerol + H2O = 9-hydroxy-(10E,12Z)-octadecadienoate + 1'-[1,2-diacyl-sn-glycero-3-phospho],3'-[1-acyl-sn-glycero-3-phospho]-glycerol + H(+). Its pathway is phospholipid metabolism. With respect to regulation, calcium-independent phospholipase. Calcium-independent and membrane-bound phospholipase, that catalyzes the esterolytic cleavage of fatty acids from glycerophospholipids to yield free fatty acids and lysophospholipids, hence regulating membrane physical properties and the release of lipid second messengers and growth factors. Hydrolyzes phosphatidylethanolamine, phosphatidylcholine and probably phosphatidylinositol with a possible preference for the former. Also has a broad substrate specificity in terms of fatty acid moieties, hydrolyzing saturated and mono-unsaturated fatty acids at nearly equal rates from either the sn-1 or sn-2 position in diacyl phosphatidylcholine. However, has a weak activity toward polyunsaturated fatty acids at the sn-2 position, and thereby favors the production of 2-arachidonoyl lysophosphatidylcholine, a key branch point metabolite in eicosanoid signaling. On the other hand, can produce arachidonic acid from the sn-1 position of diacyl phospholipid and from the sn-2 position of arachidonate-containing plasmalogen substrates. Therefore, plays an important role in the mobilization of arachidonic acid in response to cellular stimuli and the generation of lipid second messengers. Can also hydrolyze lysophosphatidylcholine. In the mitochondrial compartment, catalyzes the hydrolysis and release of oxidized aliphatic chains from cardiolipin and integrates mitochondrial bioenergetics and signaling. It is essential for maintaining efficient bioenergetic mitochondrial function through tailoring mitochondrial membrane lipid metabolism and composition. The chain is Calcium-independent phospholipase A2-gamma from Mus musculus (Mouse).